Here is a 257-residue protein sequence, read N- to C-terminus: MNPLIIKLGGVLLDSDEALERLFTALDSYRAEHRCPLLIVHGGGCLVDELMHKLSLPVVKKNGLRVTPADQIAIITGALAGTANKTLLAWAKKHAINAVGLCLGDGDSVNVTPLDPALGHVGRAHPGSPVLLTTLLEAGYLPIISSIGLTHDGELMNVNADQAATALAATLGADLILLSDISGILDGKGQRIAEMTAQKAEQLIEQGIITDGMIVKVNAALDAARTLGRPVDIASWRHAEQLPALFNGVAIGTRILA.

Residues 43–44, R65, and N157 contribute to the substrate site; that span reads GG. Residues 180–185 and 208–210 contribute to the ATP site; these read DISGIL and IIT.

The protein belongs to the acetylglutamate kinase family. ArgB subfamily. Homodimer.

Its subcellular location is the cytoplasm. It carries out the reaction N-acetyl-L-glutamate + ATP = N-acetyl-L-glutamyl 5-phosphate + ADP. It functions in the pathway amino-acid biosynthesis; L-arginine biosynthesis; N(2)-acetyl-L-ornithine from L-glutamate: step 2/4. Its function is as follows. Catalyzes the ATP-dependent phosphorylation of N-acetyl-L-glutamate. The polypeptide is Acetylglutamate kinase (Sodalis glossinidius (strain morsitans)).